A 177-amino-acid polypeptide reads, in one-letter code: Early nodulin-like protein 15 (177 aa).

Residues 1-24 (MASSSLLVTIFLCISVFFFSSVNA) form the signal peptide. A Phytocyanin domain is found at 25 to 129 (NEVTVGGKSG…GQKLRLVVIT (105 aa)). Residues Cys-83 and Cys-117 are joined by a disulfide bond. N-linked (GlcNAc...) asparagine glycosylation occurs at Asn-84. Ser-153 carries GPI-anchor amidated serine lipidation. Positions 154 to 177 (GAAKLAGGFSVVFGLVLGLWAFFF) are cleaved as a propeptide — removed in mature form.

Belongs to the early nodulin-like (ENODL) family. As to expression, mostly expressed in seedlings, siliques and flowers, and, to a lower extent, in roots, stems and seeds, but barely in leaves.

The protein localises to the cell membrane. Its function is as follows. May act as a carbohydrate transporter. Required, together with ENODL11, ENODL12, ENODL13, ENODL14 and ENODL15, for male-female communication and pollen tube reception and burst at the synergid cell surface of the female gametophyte. This Arabidopsis thaliana (Mouse-ear cress) protein is Early nodulin-like protein 15.